The following is a 376-amino-acid chain: Glucose-1-phosphate adenylyltransferase (376 aa).

Residues Y101, G166, 181–182 (EK), and S192 contribute to the alpha-D-glucose 1-phosphate site.

It belongs to the bacterial/plant glucose-1-phosphate adenylyltransferase family. In terms of assembly, homotetramer.

It catalyses the reaction alpha-D-glucose 1-phosphate + ATP + H(+) = ADP-alpha-D-glucose + diphosphate. The protein operates within glycan biosynthesis; glycogen biosynthesis. In terms of biological role, involved in the biosynthesis of ADP-glucose, a building block required for the elongation reactions to produce glycogen. Catalyzes the reaction between ATP and alpha-D-glucose 1-phosphate (G1P) to produce pyrophosphate and ADP-Glc. This is Glucose-1-phosphate adenylyltransferase from Bacillus cereus (strain ATCC 10987 / NRS 248).